A 220-amino-acid polypeptide reads, in one-letter code: Ribosomal RNA large subunit methyltransferase E (220 aa).

Residues Gly-60, Trp-62, Asp-92, Asp-108, and Asp-133 each contribute to the S-adenosyl-L-methionine site. Lys-173 (proton acceptor) is an active-site residue. Residues 195-220 (APRKPKASRDKSSETFILGRHLKQPR) form a disordered region.

This sequence belongs to the class I-like SAM-binding methyltransferase superfamily. RNA methyltransferase RlmE family.

Its subcellular location is the cytoplasm. It carries out the reaction uridine(2552) in 23S rRNA + S-adenosyl-L-methionine = 2'-O-methyluridine(2552) in 23S rRNA + S-adenosyl-L-homocysteine + H(+). In terms of biological role, specifically methylates the uridine in position 2552 of 23S rRNA at the 2'-O position of the ribose in the fully assembled 50S ribosomal subunit. This chain is Ribosomal RNA large subunit methyltransferase E, found in Burkholderia pseudomallei (strain 1710b).